Here is a 261-residue protein sequence, read N- to C-terminus: MRIALGIEYDGSGYFGWQRQAEVDSVQGQLEQALSKVANEPISLFCAGRTDAGVHATGQVVHFETNAIRNEGAWTLGVNANLPDNIAVRWAKEVDDSFHARFSATARRYRYVIYNHNFRPGILRHGVSHYHGDIDADKMHVAAQALLGEQDFTSFRAVQCQSKTPFRNVHSVKVTRQGMYVIVDISANAFLHHMVRNIVGSLLEIGLGNQPLTWMADLLALKDRNQAAATAKPNGLYLVDVTYPEQYQLPKLALGPLFMLD.

D51 (nucleophile) is an active-site residue. Residue Y109 participates in substrate binding.

Belongs to the tRNA pseudouridine synthase TruA family. As to quaternary structure, homodimer.

It catalyses the reaction uridine(38/39/40) in tRNA = pseudouridine(38/39/40) in tRNA. Functionally, formation of pseudouridine at positions 38, 39 and 40 in the anticodon stem and loop of transfer RNAs. This Shewanella sp. (strain MR-4) protein is tRNA pseudouridine synthase A.